Here is a 602-residue protein sequence, read N- to C-terminus: Probable pectinesterase/pectinesterase inhibitor 64 (602 aa).

The helical transmembrane segment at 36 to 56 (ILIIIAASCILLLLISLLIYA) threads the bilayer. The segment at 62–91 (SRNHHNPSHQTPTSDDHPPPETPPSPPPIA) is disordered. Residues 81-90 (PETPPSPPPI) show a composition bias toward pro residues. The interval 87–237 (PPPIAQIRLA…VNLTGNALSM (151 aa)) is pectinesterase inhibitor 64. 5 N-linked (GlcNAc...) asparagine glycosylation sites follow: asparagine 98, asparagine 156, asparagine 212, asparagine 229, and asparagine 315. Residues 288-595 (DVTVCKNGGK…YSVANFIQAD (308 aa)) form a pectinesterase 64 region. Substrate-binding residues include threonine 367 and glutamine 397. Aspartate 420 acts as the Proton donor; for pectinesterase activity in catalysis. The cysteines at positions 434 and 454 are disulfide-linked. The Nucleophile; for pectinesterase activity role is filled by aspartate 441. N-linked (GlcNAc...) asparagine glycans are attached at residues asparagine 492 and asparagine 496. Substrate-binding residues include arginine 518 and tryptophan 520.

The protein in the N-terminal section; belongs to the PMEI family. It in the C-terminal section; belongs to the pectinesterase family. In terms of tissue distribution, expressed in siliques.

Its subcellular location is the membrane. The catalysed reaction is [(1-&gt;4)-alpha-D-galacturonosyl methyl ester](n) + n H2O = [(1-&gt;4)-alpha-D-galacturonosyl](n) + n methanol + n H(+). It functions in the pathway glycan metabolism; pectin degradation; 2-dehydro-3-deoxy-D-gluconate from pectin: step 1/5. Acts in the modification of cell walls via demethylesterification of cell wall pectin. The protein is Probable pectinesterase/pectinesterase inhibitor 64 (PME64) of Arabidopsis thaliana (Mouse-ear cress).